The primary structure comprises 272 residues: Imidazole glycerol phosphate synthase subunit HisF (272 aa).

Catalysis depends on residues Asp-11 and Asp-130.

It belongs to the HisA/HisF family. As to quaternary structure, heterodimer of HisH and HisF.

It is found in the cytoplasm. The catalysed reaction is 5-[(5-phospho-1-deoxy-D-ribulos-1-ylimino)methylamino]-1-(5-phospho-beta-D-ribosyl)imidazole-4-carboxamide + L-glutamine = D-erythro-1-(imidazol-4-yl)glycerol 3-phosphate + 5-amino-1-(5-phospho-beta-D-ribosyl)imidazole-4-carboxamide + L-glutamate + H(+). It functions in the pathway amino-acid biosynthesis; L-histidine biosynthesis; L-histidine from 5-phospho-alpha-D-ribose 1-diphosphate: step 5/9. In terms of biological role, IGPS catalyzes the conversion of PRFAR and glutamine to IGP, AICAR and glutamate. The HisF subunit catalyzes the cyclization activity that produces IGP and AICAR from PRFAR using the ammonia provided by the HisH subunit. This chain is Imidazole glycerol phosphate synthase subunit HisF, found in Methanococcus maripaludis (strain C7 / ATCC BAA-1331).